A 1519-amino-acid polypeptide reads, in one-letter code: DNA (cytosine-5)-methyltransferase 4 (1519 aa).

A compositionally biased stretch (basic and acidic residues) spans 1–24 (MEMETKAGKQKKRSVDSDDDVSKE). The interval 1–31 (MEMETKAGKQKKRSVDSDDDVSKERRPKRAA) is disordered. K583 participates in a covalent cross-link: Glycyl lysine isopeptide (Lys-Gly) (interchain with G-Cter in ubiquitin). Positions 641 to 668 (ENVEEEELEEVEEEDENEEDDPEENELE) are disordered. Positions 642-668 (NVEEEELEEVEEEDENEEDDPEENELE) are enriched in acidic residues. BAH domains lie at 715 to 849 (DVVV…FSLP) and 916 to 1033 (TTLK…KQFP). In terms of domain architecture, SAM-dependent MTase C5-type spans 1078–1512 (LATLDIFAGC…RKLKEALYLK (435 aa)). The active site involves C1183.

The protein belongs to the class I-like SAM-binding methyltransferase superfamily. C5-methyltransferase family. In terms of tissue distribution, expressed at low levels in vegetative and floral organs.

It localises to the nucleus. The enzyme catalyses a 2'-deoxycytidine in DNA + S-adenosyl-L-methionine = a 5-methyl-2'-deoxycytidine in DNA + S-adenosyl-L-homocysteine + H(+). Maintains chromatin CpG methylation that plays a role in genomic imprinting, regulation of embryogenesis and seed viability. Required for proper patterns of CG DNA methylation in dividing cells. This Arabidopsis thaliana (Mouse-ear cress) protein is DNA (cytosine-5)-methyltransferase 4 (MET4).